We begin with the raw amino-acid sequence, 415 residues long: Tumor necrosis factor receptor superfamily member 3 (415 aa).

A signal peptide spans 1–30; it reads MRLPRASSPCGLAWGPLLLGLSGLLVASQP. The Extracellular portion of the chain corresponds to 31–223; it reads QLVPPYRIEN…NPPEPGAMLL (193 aa). Asn-40 carries N-linked (GlcNAc...) asparagine glycosylation. TNFR-Cys repeat units lie at residues 42–81, 82–124, 125–170, and 171–213; these read TCWDQDKEYYEPMHDVCCSRCPPGEFVFAVCSRSQDTVCK, TCPH…KAEC, RCQP…VNCV, and PCKP…TICK. 10 cysteine pairs are disulfide-bonded: Cys-43–Cys-58, Cys-59–Cys-72, Cys-62–Cys-80, Cys-83–Cys-98, Cys-101–Cys-116, Cys-104–Cys-124, Cys-126–Cys-132, Cys-139–Cys-150, Cys-142–Cys-169, and Cys-172–Cys-187. Residue Asn-179 is glycosylated (N-linked (GlcNAc...) asparagine). The chain crosses the membrane as a helical span at residues 224-244; it reads LAILLSLVLFLLFTTVLACAW. Residues 245-415 lie on the Cytoplasmic side of the membrane; that stretch reads MRHPSLCRKL…ETETLGCQDL (171 aa). The segment at 261 to 304 is disordered; it reads HPEGEESPPCPAPRADPHFPDLAEPLLPMSGDLSPSPAGPPTAP. Ser-315 carries the phosphoserine modification. The interval 361–399 is disordered; the sequence is LGGTRGPGDPPAPPEPPYPTPEEGAPGPSELSTPYQEDG. Pro residues predominate over residues 368–380; the sequence is GDPPAPPEPPYPT.

Self-associates; dimerization and trimerization are promoted by lymphotoxin (LTA(3)). Associates with TRAF3. Associates with TRAF4. Associates with TRAF5.

The protein resides in the membrane. Functionally, receptor for the heterotrimeric lymphotoxin containing LTA and LTB, and for TNFS14/LIGHT. Activates NF-kappa-B signaling upon stimulation with lymphotoxin. Promotes apoptosis via TRAF3 and TRAF5. May play a role in the development of lymphoid organs. (Microbial infection) Plays a role in host defense against Zika virus infection. The protein is Tumor necrosis factor receptor superfamily member 3 (Ltbr) of Mus musculus (Mouse).